Consider the following 297-residue polypeptide: NADH-ubiquinone oxidoreductase chain 1 (297 aa).

9 helical membrane passes run Met-1–Glu-21, Pro-34–Leu-54, Trp-66–Ile-86, Leu-99–Gly-119, Val-139–Leu-159, Gly-170–Ala-190, Leu-206–Ala-228, Thr-235–Arg-257, and Leu-277–Phe-297.

Belongs to the complex I subunit 1 family.

The protein resides in the mitochondrion inner membrane. The enzyme catalyses a ubiquinone + NADH + 5 H(+)(in) = a ubiquinol + NAD(+) + 4 H(+)(out). Core subunit of the mitochondrial membrane respiratory chain NADH dehydrogenase (Complex I) that is believed to belong to the minimal assembly required for catalysis. Complex I functions in the transfer of electrons from NADH to the respiratory chain. The immediate electron acceptor for the enzyme is believed to be ubiquinone. This Hyaloraphidium curvatum (Lower fungus) protein is NADH-ubiquinone oxidoreductase chain 1.